A 985-amino-acid polypeptide reads, in one-letter code: Alpha-glucosidase (985 aa).

The signal sequence occupies residues 1-25 (MVKLTHLLARAWLVPLAYGASQSLL). A glycan (O-linked (Man) threonine) is linked at T36. Residues N124, N143, N218, N347, and N422 are each glycosylated (N-linked (GlcNAc...) asparagine). D490 functions as the Nucleophile in the catalytic mechanism. The active site involves E493. N-linked (GlcNAc...) asparagine glycans are attached at residues N506, N534, and N537. O-linked (Man) serine glycosylation is found at S545 and S550. T559 carries an O-linked (Man) threonine glycan. S560 is a glycosylation site (O-linked (Man) serine). T561 is a glycosylation site (O-linked (Man) threonine). A glycan (O-linked (Man) serine) is linked at S562. T571 carries an O-linked (Man) threonine glycan. N-linked (GlcNAc...) asparagine glycosylation is found at N601 and N623. The Proton donor role is filled by D660. N-linked (GlcNAc...) asparagine glycans are attached at residues N835 and N881. O-linked (Man) serine glycosylation occurs at S895. N-linked (GlcNAc...) asparagine glycosylation is found at N899, N957, and N970.

This sequence belongs to the glycosyl hydrolase 31 family. Post-translationally, the O-linked saccharide is not identified, but is probably mannose.

It catalyses the reaction Hydrolysis of terminal, non-reducing (1-&gt;4)-linked alpha-D-glucose residues with release of alpha-D-glucose.. Functionally, hydrolyzes malto-oligosaccharides, but has a low activity toward soluble starch. This is Alpha-glucosidase (aglA) from Aspergillus niger.